The chain runs to 418 residues: Phospho-N-acetylmuramoyl-pentapeptide-transferase (418 aa).

10 helical membrane passes run 22–42, 72–92, 95–115, 135–155, 208–228, 244–264, 277–297, 302–322, 326–346, and 395–415; these read YISF…VLIG, TPTM…LLLA, SNIY…LGLI, IIAQ…SPNI, AATW…VSNG, AIIG…GFAA, LTVF…HNAF, FMGD…AIII, LLLP…MIQV, and KIVV…VVTL.

It belongs to the glycosyltransferase 4 family. MraY subfamily. It depends on Mg(2+) as a cofactor.

It is found in the cell inner membrane. The catalysed reaction is UDP-N-acetyl-alpha-D-muramoyl-L-alanyl-gamma-D-glutamyl-meso-2,6-diaminopimeloyl-D-alanyl-D-alanine + di-trans,octa-cis-undecaprenyl phosphate = di-trans,octa-cis-undecaprenyl diphospho-N-acetyl-alpha-D-muramoyl-L-alanyl-D-glutamyl-meso-2,6-diaminopimeloyl-D-alanyl-D-alanine + UMP. Its pathway is cell wall biogenesis; peptidoglycan biosynthesis. In terms of biological role, catalyzes the initial step of the lipid cycle reactions in the biosynthesis of the cell wall peptidoglycan: transfers peptidoglycan precursor phospho-MurNAc-pentapeptide from UDP-MurNAc-pentapeptide onto the lipid carrier undecaprenyl phosphate, yielding undecaprenyl-pyrophosphoryl-MurNAc-pentapeptide, known as lipid I. This chain is Phospho-N-acetylmuramoyl-pentapeptide-transferase, found in Azobacteroides pseudotrichonymphae genomovar. CFP2.